Consider the following 605-residue polypeptide: MGQVLSDESSRHLSHEELTHELASRFADKCFTSLEIYSFKDVFKSLADNQGGIRYLKEDTLARFLEIPDILHVSPVVFQMVSYIGAFPFLQNAPAVLGLDQMVMVVVIMTQRHKRVLAKGATDRAKLLFKSLAVHDRTASEAAVAAEKSSKEEQATQSQPRSHVAGFAVDEPVEEPEDDDDDLEIAAFELLDINDAVWQGDAPKVQGAMIPADNFRKLLMLLILIAPLNAQERLSMYSTRVTGDELDSLRATAEHILAAFLNVEKAPGIKFSQYNRVLPVCFPNLFSGFSPLFEHFLFSKNLDFTKHKGEEPVAEKQPEEIVQPLLPEPGEILNLNVLSQLSFFLPGSDLFRRLRPLYSGNKDGFSTGSFEGKVFNWRAPTILLVRGTRIDDDPRGSQQSTFAASIPPRRFPSGSKGERLTFGVYVSTPWKHTAKETFGEGDTVLFQLEPVHDVFPASRYNSEFISFTKAPTNRPMLGVGCPHPRPSQAHRRNEMLSLGSVSLLLDDSFEYGVFNHDWTAGGGAFATSVSRKFDFQDRFEIESLEVWGCGGDEEAKSQADRWAWEHREAEARRKVNLGTGDNDADRALLEMAGLVGSGRSGGSMA.

The tract at residues 145 to 164 (AAEKSSKEEQATQSQPRSHV) is disordered. Residues 331–550 (EILNLNVLSQ…IESLEVWGCG (220 aa)) enclose the TLDc domain.

The protein belongs to the RTC5 family.

It localises to the cytoplasm. Functionally, may be involved in a process influencing telomere capping. The sequence is that of Restriction of telomere capping protein 5 (RTC5) from Colletotrichum graminicola (strain M1.001 / M2 / FGSC 10212) (Maize anthracnose fungus).